The following is a 149-amino-acid chain: Large ribosomal subunit protein bL9 (149 aa).

It belongs to the bacterial ribosomal protein bL9 family. As to quaternary structure, part of the 50S ribosomal subunit. In stalled/collided disomes (pairs of ribosomes where the leading ribosome is stalled and a second ribosome has collided with it), bL9 in the collided ribosome contacts bS6 and uL2, while it contacts only helices of the 16S rRNA in the stalled ribosome; the inter-ribosome bridge thus formed is different from that formed between normally translating ribosomes.

Binds to the 23S rRNA. This Bacillus subtilis (strain 168) protein is Large ribosomal subunit protein bL9.